Here is a 574-residue protein sequence, read N- to C-terminus: MKASQFFISTLKEAPADAEIVSHKLMMRAGMIKKLGAGLYTYMPVGLRVIRKVEQIVREEMNASGAVEVLMPVVQPAELWQETGRWDKMGDEMMRVKDRHERDLVIQPTSEEVVTDIARTEIRSYKQMPVNFYQIQTKFRDERRPRFGIMRGREFTMKDAYSFDRDAEGLKVSYEKMYGAYTRIFQRFGLEFRAVAADNGAIGGSGSHEFHVIADTGEDAIVYSPDSDYAANIEAAEALAPAMPRGAATEALTKTHTPKRAKCEAVAEQLGIALQRTVKSIVLAKDVEGGEPQIWLLLLRGDHELNEIKASKVPGLADFRFATEGEILRAFGTPPGYLGPIGTKQPVKVVADRTVAAMSDFVVGANEEDFHYTGVNWGRDLPEAEVYDLRNVVEGDPSPDGKGTLAICRGIEVGHVFMLGTRYSESMSATFLDENGKTQPMMMGCYGIGITRILGAAIEQNYDARGIIWPVSIAPFEVVICPVGYDRSEAVRAEADRLHAELAAAGIDVILDDRGERPGAMFADWELIGVPFRVVVGERGLKDGKLELQGRRDEAAAAVAPADVLATLKSRLAQ.

Belongs to the class-II aminoacyl-tRNA synthetase family. ProS type 1 subfamily. In terms of assembly, homodimer.

Its subcellular location is the cytoplasm. It carries out the reaction tRNA(Pro) + L-proline + ATP = L-prolyl-tRNA(Pro) + AMP + diphosphate. Functionally, catalyzes the attachment of proline to tRNA(Pro) in a two-step reaction: proline is first activated by ATP to form Pro-AMP and then transferred to the acceptor end of tRNA(Pro). As ProRS can inadvertently accommodate and process non-cognate amino acids such as alanine and cysteine, to avoid such errors it has two additional distinct editing activities against alanine. One activity is designated as 'pretransfer' editing and involves the tRNA(Pro)-independent hydrolysis of activated Ala-AMP. The other activity is designated 'posttransfer' editing and involves deacylation of mischarged Ala-tRNA(Pro). The misacylated Cys-tRNA(Pro) is not edited by ProRS. This Ralstonia nicotianae (strain ATCC BAA-1114 / GMI1000) (Ralstonia solanacearum) protein is Proline--tRNA ligase.